Here is a 274-residue protein sequence, read N- to C-terminus: Energy-coupling factor transporter ATP-binding protein EcfA (274 aa).

Positions 2–235 (IRLENVSYNY…LSLRYLGLTP (234 aa)) constitute an ABC transporter domain. 35 to 42 (GKNGSGKS) serves as a coordination point for ATP.

Belongs to the ABC transporter superfamily. Energy-coupling factor EcfA family. In terms of assembly, forms a stable energy-coupling factor (ECF) transporter complex composed of 2 membrane-embedded substrate-binding proteins (S component), 2 ATP-binding proteins (A component) and 2 transmembrane proteins (T component).

It localises to the cell membrane. Functionally, ATP-binding (A) component of a common energy-coupling factor (ECF) ABC-transporter complex. Unlike classic ABC transporters this ECF transporter provides the energy necessary to transport a number of different substrates. The sequence is that of Energy-coupling factor transporter ATP-binding protein EcfA from Methanosarcina acetivorans (strain ATCC 35395 / DSM 2834 / JCM 12185 / C2A).